The sequence spans 634 residues: Chaperone protein DnaK 2 (634 aa).

T197 is modified (phosphothreonine; by autocatalysis). Residues 600–620 (ASAEASANAQAGPSSSSSSSS) are compositionally biased toward low complexity. The segment at 600 to 634 (ASAEASANAQAGPSSSSSSSSGDDDVIDAEFSESK) is disordered. The segment covering 621–634 (GDDDVIDAEFSESK) has biased composition (acidic residues).

This sequence belongs to the heat shock protein 70 family.

Its function is as follows. Acts as a chaperone. The sequence is that of Chaperone protein DnaK 2 from Synechococcus sp. (strain ATCC 27144 / PCC 6301 / SAUG 1402/1) (Anacystis nidulans).